The chain runs to 92 residues: MERILYQVFPSDTNYSYDPPAVTAPSQGSSQTDFGKVVIALVVILVSVGVFYLAYTLFLKDCILLFKAKKQRTTTEIGFGQTPARNQDHPGP.

Residues 38 to 58 (VIALVVILVSVGVFYLAYTLF) form a helical membrane-spanning segment.

It belongs to the mastrevirus movement protein family. In terms of assembly, interacts with the capsid protein (CP). Part of a MP-CP-viral DNA complex.

The protein localises to the host membrane. Involved in the viral transport within, and between cells. The polypeptide is Movement protein (Phaseolus vulgaris (Kidney bean)).